The following is a 449-amino-acid chain: Bifunctional protein GlmU (449 aa).

Residues 1–225 (MLSVAILAAG…NGELQGINNR (225 aa)) form a pyrophosphorylase region. Residues 7–10 (LAAG), Lys-21, Gln-73, and 78–79 (GT) each bind UDP-N-acetyl-alpha-D-glucosamine. Residue Asp-103 coordinates Mg(2+). Residues Gly-140, Glu-154, Asn-169, and Asn-223 each contribute to the UDP-N-acetyl-alpha-D-glucosamine site. Position 223 (Asn-223) interacts with Mg(2+). Positions 226–246 (IHLSECEECIQNSIKEKHMLN) are linker. The interval 247-449 (GVTFINKASC…NIENWKKKKS (203 aa)) is N-acetyltransferase. UDP-N-acetyl-alpha-D-glucosamine contacts are provided by Arg-328 and Lys-346. His-358 functions as the Proton acceptor in the catalytic mechanism. Residues Tyr-361 and Asn-372 each contribute to the UDP-N-acetyl-alpha-D-glucosamine site. Acetyl-CoA is bound by residues Ala-375, Ala-418, and Arg-435.

This sequence in the N-terminal section; belongs to the N-acetylglucosamine-1-phosphate uridyltransferase family. The protein in the C-terminal section; belongs to the transferase hexapeptide repeat family. In terms of assembly, homotrimer. Mg(2+) is required as a cofactor.

It localises to the cytoplasm. It carries out the reaction alpha-D-glucosamine 1-phosphate + acetyl-CoA = N-acetyl-alpha-D-glucosamine 1-phosphate + CoA + H(+). The enzyme catalyses N-acetyl-alpha-D-glucosamine 1-phosphate + UTP + H(+) = UDP-N-acetyl-alpha-D-glucosamine + diphosphate. The protein operates within nucleotide-sugar biosynthesis; UDP-N-acetyl-alpha-D-glucosamine biosynthesis; N-acetyl-alpha-D-glucosamine 1-phosphate from alpha-D-glucosamine 6-phosphate (route II): step 2/2. Its pathway is nucleotide-sugar biosynthesis; UDP-N-acetyl-alpha-D-glucosamine biosynthesis; UDP-N-acetyl-alpha-D-glucosamine from N-acetyl-alpha-D-glucosamine 1-phosphate: step 1/1. It participates in bacterial outer membrane biogenesis; LPS lipid A biosynthesis. In terms of biological role, catalyzes the last two sequential reactions in the de novo biosynthetic pathway for UDP-N-acetylglucosamine (UDP-GlcNAc). The C-terminal domain catalyzes the transfer of acetyl group from acetyl coenzyme A to glucosamine-1-phosphate (GlcN-1-P) to produce N-acetylglucosamine-1-phosphate (GlcNAc-1-P), which is converted into UDP-GlcNAc by the transfer of uridine 5-monophosphate (from uridine 5-triphosphate), a reaction catalyzed by the N-terminal domain. The protein is Bifunctional protein GlmU of Prochlorococcus marinus (strain AS9601).